The sequence spans 259 residues: Phosphate import ATP-binding protein PstB (259 aa).

An ABC transporter domain is found at 13–254 (LEVNNLNFHY…PRLQRTEDYI (242 aa)). ATP is bound at residue 45-52 (GPSGCGKS).

This sequence belongs to the ABC transporter superfamily. Phosphate importer (TC 3.A.1.7) family. The complex is composed of two ATP-binding proteins (PstB), two transmembrane proteins (PstC and PstA) and a solute-binding protein (PstS).

The protein resides in the cell inner membrane. It catalyses the reaction phosphate(out) + ATP + H2O = ADP + 2 phosphate(in) + H(+). Part of the ABC transporter complex PstSACB involved in phosphate import. Responsible for energy coupling to the transport system. The protein is Phosphate import ATP-binding protein PstB of Pasteurella multocida (strain Pm70).